The sequence spans 444 residues: Homogentisate 1,2-dioxygenase (444 aa).

The active-site Proton acceptor is histidine 298. 2 residues coordinate Fe cation: histidine 341 and glutamate 347. Positions 356 and 377 each coordinate homogentisate. Histidine 377 lines the Fe cation pocket.

This sequence belongs to the homogentisate dioxygenase family. Hexamer; dimer of trimers. Fe cation serves as cofactor.

It carries out the reaction homogentisate + O2 = 4-maleylacetoacetate + H(+). It participates in amino-acid degradation; L-phenylalanine degradation; acetoacetate and fumarate from L-phenylalanine: step 4/6. Its function is as follows. Involved in the catabolism of homogentisate (2,5-dihydroxyphenylacetate or 2,5-OH-PhAc), a central intermediate in the degradation of phenylalanine and tyrosine. Catalyzes the oxidative ring cleavage of the aromatic ring of homogentisate to yield maleylacetoacetate. The polypeptide is Homogentisate 1,2-dioxygenase (Burkholderia orbicola (strain MC0-3)).